Here is a 199-residue protein sequence, read N- to C-terminus: Adenylyl-sulfate kinase (199 aa).

34 to 41 (GLSGSGKS) provides a ligand contact to ATP. S108 (phosphoserine intermediate) is an active-site residue.

The protein belongs to the APS kinase family.

The enzyme catalyses adenosine 5'-phosphosulfate + ATP = 3'-phosphoadenylyl sulfate + ADP + H(+). Its pathway is sulfur metabolism; hydrogen sulfide biosynthesis; sulfite from sulfate: step 2/3. Functionally, catalyzes the synthesis of activated sulfate. The chain is Adenylyl-sulfate kinase from Oceanobacillus iheyensis (strain DSM 14371 / CIP 107618 / JCM 11309 / KCTC 3954 / HTE831).